Consider the following 203-residue polypeptide: Nascent polypeptide-associated complex subunit alpha (203 aa).

Positions 1–19 (MADPRIEELPDEEVPKTNV) are enriched in basic and acidic residues. Residues 1 to 45 (MADPRIEELPDEEVPKTNVEDAADSSESEAGEEPTIPGGAAVTIH) form a disordered region. Acidic residues predominate over residues 21–32 (DAADSSESEAGE). The 66-residue stretch at 46 to 111 (SRNEKKARKA…AKIEDLNSQA (66 aa)) folds into the NAC-A/B domain. A disordered region spans residues 118-167 (QLAAAEAAGEHAGHDHDHDKGKGKAPETEAKKEEEEDDGEEVDETGLEPK). The span at 125-150 (AGEHAGHDHDHDKGKGKAPETEAKKE) shows a compositional bias: basic and acidic residues. Residues 151-163 (EEEDDGEEVDETG) show a composition bias toward acidic residues. The UBA domain maps to 164-203 (LEPKDIDLVMAQANVSRKKAVKALRENDNDIVNSIMALSI).

The protein belongs to the NAC-alpha family. As to quaternary structure, part of the nascent polypeptide-associated complex (NAC), consisting of egd2 and egd1. NAC associates with ribosomes via egd1.

It is found in the cytoplasm. The protein localises to the nucleus. Functionally, component of the nascent polypeptide-associated complex (NAC), a dynamic component of the ribosomal exit tunnel, protecting the emerging polypeptides from interaction with other cytoplasmic proteins to ensure appropriate nascent protein targeting. The NAC complex also promotes mitochondrial protein import by enhancing productive ribosome interactions with the outer mitochondrial membrane and blocks the inappropriate interaction of ribosomes translating non-secretory nascent polypeptides with translocation sites in the membrane of the endoplasmic reticulum. Egd2 may also be involved in transcription regulation. This Emericella nidulans (strain FGSC A4 / ATCC 38163 / CBS 112.46 / NRRL 194 / M139) (Aspergillus nidulans) protein is Nascent polypeptide-associated complex subunit alpha (egd2).